The following is a 214-amino-acid chain: Probable GTP-binding protein EngB (214 aa).

An EngB-type G domain is found at 40 to 212 (SLPEIVFVGK…KASFAQCIKH (173 aa)). Residues 48 to 55 (GKSNVGKS), 75 to 79 (GRTRQ), 93 to 96 (DLPG), 160 to 163 (TKSD), and 191 to 193 (VSS) each bind GTP. Mg(2+) is bound by residues Ser55 and Thr77.

It belongs to the TRAFAC class TrmE-Era-EngA-EngB-Septin-like GTPase superfamily. EngB GTPase family. It depends on Mg(2+) as a cofactor.

Necessary for normal cell division and for the maintenance of normal septation. This chain is Probable GTP-binding protein EngB, found in Rickettsia prowazekii (strain Madrid E).